Here is a 216-residue protein sequence, read N- to C-terminus: Nudix hydrolase 26, chloroplastic (216 aa).

Residues 1–53 constitute a chloroplast transit peptide; the sequence is MALYRPLLLHHPTSPSVTTFLRNYPSKPIKFSSLPFLHRCRKSRVSSSSARCC. The region spanning 62–209 is the Nudix hydrolase domain; that stretch reads GYRRNVGVCL…KKPVYKEVMS (148 aa). The Nudix box signature appears at 95–116; it reads GGIDEGEDPRVAVMRELKEETG. Mn(2+) is bound by residues Glu110 and Glu114.

This sequence belongs to the Nudix hydrolase family. Mg(2+) is required as a cofactor. The cofactor is Mn(2+). In terms of tissue distribution, expressed in roots, leaves, stems and inflorescences.

It localises to the plastid. The protein localises to the chloroplast. Mediates the hydrolysis of some nucleoside diphosphate derivatives. Can use diadenosine 5',5'''-P(1)P(5) pentaphosphate (Ap(5)A), diadenosine 5',5'''-P(1)P(4) tetraphosphate (Ap(4)A) and diadenosine 5',5'''-P(1)P(3) triphosphate (Ap(3)A) as substrates. This is Nudix hydrolase 26, chloroplastic (NUDT26) from Arabidopsis thaliana (Mouse-ear cress).